Here is a 194-residue protein sequence, read N- to C-terminus: CMRF35-like molecule 5 (194 aa).

The signal sequence occupies residues 1–18 (MWLSPSLLLLILPGYSIA). The region spanning 19 to 125 (AKITGPTTVN…LGVKVQVTIN (107 aa)) is the Ig-like V-type domain. The Extracellular segment spans residues 19–165 (AKITGPTTVN…LTRSPLKSTH (147 aa)). The N-linked (GlcNAc...) asparagine glycan is linked to asparagine 28. An intrachain disulfide couples cysteine 39 to cysteine 107. A helical transmembrane segment spans residues 166-186 (FLFLFLLELPLLLSMLGTVLW). At 187–194 (VNRPQRRS) the chain is on the cytoplasmic side.

This sequence belongs to the CD300 family. In terms of assembly, forms complexes with the CD300 family members with exception of CD300c. In terms of processing, N-glycosylated. As to expression, expression seems restricted to cells of myeloid lineage.

The protein resides in the cell membrane. The chain is CMRF35-like molecule 5 (CD300LD) from Homo sapiens (Human).